Reading from the N-terminus, the 622-residue chain is DNA mismatch repair protein MutL (622 aa).

It belongs to the DNA mismatch repair MutL/HexB family.

Functionally, this protein is involved in the repair of mismatches in DNA. It is required for dam-dependent methyl-directed DNA mismatch repair. May act as a 'molecular matchmaker', a protein that promotes the formation of a stable complex between two or more DNA-binding proteins in an ATP-dependent manner without itself being part of a final effector complex. The chain is DNA mismatch repair protein MutL from Actinobacillus pleuropneumoniae serotype 3 (strain JL03).